A 159-amino-acid chain; its full sequence is SsrA-binding protein (159 aa).

Residues 140–150 (RATEKERDWNR) show a composition bias toward basic and acidic residues. Positions 140–159 (RATEKERDWNRQKQRVLRQR) are disordered.

Belongs to the SmpB family.

It localises to the cytoplasm. Functionally, required for rescue of stalled ribosomes mediated by trans-translation. Binds to transfer-messenger RNA (tmRNA), required for stable association of tmRNA with ribosomes. tmRNA and SmpB together mimic tRNA shape, replacing the anticodon stem-loop with SmpB. tmRNA is encoded by the ssrA gene; the 2 termini fold to resemble tRNA(Ala) and it encodes a 'tag peptide', a short internal open reading frame. During trans-translation Ala-aminoacylated tmRNA acts like a tRNA, entering the A-site of stalled ribosomes, displacing the stalled mRNA. The ribosome then switches to translate the ORF on the tmRNA; the nascent peptide is terminated with the 'tag peptide' encoded by the tmRNA and targeted for degradation. The ribosome is freed to recommence translation, which seems to be the essential function of trans-translation. This Alcanivorax borkumensis (strain ATCC 700651 / DSM 11573 / NCIMB 13689 / SK2) protein is SsrA-binding protein.